The sequence spans 244 residues: MRNVMIVVEYDGTNYHGWQYQKNAVTVQEVLQKAIKKVTGEEVNLIGASRTDTGVHALYQVANFKTNTKIPAEKLPYALNSVLPDDIVVVQAKDVEDSFHARYSAKRKRYKYIILNRKFQMPTMRNYCWHISYPLNIEEMKKAASYLIGTHDFSAFKASGSSKTSTIRTVYDLTIEKNEDFINIEIEANGFLYNMVRIIVGTLSYVGLGKIKEDEVYDILKSKDRTKAGITAPPQGLYLIKIIY.

The Nucleophile role is filled by aspartate 52. Tyrosine 110 is a substrate binding site.

It belongs to the tRNA pseudouridine synthase TruA family. In terms of assembly, homodimer.

It catalyses the reaction uridine(38/39/40) in tRNA = pseudouridine(38/39/40) in tRNA. Functionally, formation of pseudouridine at positions 38, 39 and 40 in the anticodon stem and loop of transfer RNAs. This chain is tRNA pseudouridine synthase A, found in Thermoanaerobacter pseudethanolicus (strain ATCC 33223 / 39E) (Clostridium thermohydrosulfuricum).